An 83-amino-acid chain; its full sequence is Small integral membrane protein 10 (83 aa).

A helical transmembrane segment spans residues 64 to 82; that stretch reads FFYFYILASVILNVHLQVY.

It is found in the membrane. The protein is Small integral membrane protein 10 (SMIM10) of Homo sapiens (Human).